Reading from the N-terminus, the 437-residue chain is Adenylosuccinate synthetase (437 aa).

Residues 12–18 and 40–42 contribute to the GTP site; these read GDEGKGK and GHT. The active-site Proton acceptor is the Asp-13. Mg(2+) contacts are provided by Asp-13 and Gly-40. IMP-binding positions include 13-16, 38-41, Thr-128, Arg-142, Gln-223, Thr-238, and Arg-302; these read DEGK and NAGH. His-41 acts as the Proton donor in catalysis. 298 to 304 serves as a coordination point for substrate; the sequence is TTTGRKR. Residues Arg-304, 330–332, and 412–414 each bind GTP; these read KLD and SLG.

It belongs to the adenylosuccinate synthetase family. Homodimer. Mg(2+) serves as cofactor.

It is found in the cytoplasm. The enzyme catalyses IMP + L-aspartate + GTP = N(6)-(1,2-dicarboxyethyl)-AMP + GDP + phosphate + 2 H(+). It participates in purine metabolism; AMP biosynthesis via de novo pathway; AMP from IMP: step 1/2. In terms of biological role, plays an important role in the de novo pathway of purine nucleotide biosynthesis. Catalyzes the first committed step in the biosynthesis of AMP from IMP. This chain is Adenylosuccinate synthetase, found in Trichodesmium erythraeum (strain IMS101).